We begin with the raw amino-acid sequence, 158 residues long: Ankyrin repeat domain-containing protein 37 (158 aa).

ANK repeat units follow at residues 1 to 25, 30 to 59, and 63 to 92; these read MLLL…SVNA, CEQS…DLNQ, and FGEA…QIDL. A Nuclear localization signal motif is present at residues 129–149; that stretch reads EQPNKDHCVQVLRLKRSFGSE.

Ubiquitinated by the CRL2(FEM1B) complex, leading to its degradation.

It localises to the nucleus. The protein resides in the cytoplasm. This is Ankyrin repeat domain-containing protein 37 (ANKRD37) from Bos taurus (Bovine).